The sequence spans 25 residues: LVLPEVYDQDGHPLRIGQRYIINNP.

It belongs to the protease inhibitor I3 (leguminous Kunitz-type inhibitor) family. As to expression, cortex of tuber.

Functionally, inhibitor of subtilisin. Inhibits moderately trypsin and chymotrypsin (serine proteases). May protect the plant by inhibiting proteases of invading organisms. The chain is Cysteine protease inhibitor 2 from Solanum tuberosum (Potato).